The chain runs to 253 residues: 5'-nucleotidase SurE (253 aa).

Residues Asp-8, Asp-9, Ser-39, and Asn-92 each coordinate a divalent metal cation.

Belongs to the SurE nucleotidase family. Requires a divalent metal cation as cofactor.

Its subcellular location is the cytoplasm. The enzyme catalyses a ribonucleoside 5'-phosphate + H2O = a ribonucleoside + phosphate. Its function is as follows. Nucleotidase that shows phosphatase activity on nucleoside 5'-monophosphates. This Burkholderia vietnamiensis (strain G4 / LMG 22486) (Burkholderia cepacia (strain R1808)) protein is 5'-nucleotidase SurE.